The sequence spans 374 residues: Cell division protein DivIB (374 aa).

The tract at residues 1–90 is disordered; it reads MWKISNENDI…EEEHFADRLP (90 aa). Residues 1–103 lie on the Cytoplasmic side of the membrane; that stretch reads MWKISNENDI…KTRNKRLYRR (103 aa). A compositionally biased stretch (basic and acidic residues) spans 39–53; that stretch reads YLKKQAEEAASKGEN. Polar residues predominate over residues 56–75; it reads AEVTITLQEQSQEEPQQHLP. The chain crosses the membrane as a helical span at residues 104-124; sequence LAFILTCLGTAILVALYFVSP. At 125–374 the chain is on the extracellular side; it reads LSRLSEVTVS…GENQEVQQAE (250 aa). The POTRA domain maps to 126 to 197; it reads SRLSEVTVSG…NSFKIDIQEY (72 aa). Positions 325–374 are disordered; it reads KESEETGSEVSEDSAVENQEVVDPNAGVATDEANNGTPTNGENQEVQQAE. The segment covering 326-339 has biased composition (acidic residues); sequence ESEETGSEVSEDSA. Positions 356-374 are enriched in polar residues; that stretch reads EANNGTPTNGENQEVQQAE.

Belongs to the FtsQ/DivIB family. DivIB subfamily.

Its subcellular location is the cell membrane. Functionally, cell division protein that may be involved in stabilizing or promoting the assembly of the division complex. The sequence is that of Cell division protein DivIB from Enterococcus faecalis (strain ATCC 700802 / V583).